The chain runs to 274 residues: Nickel/cobalt efflux system RcnA (274 aa).

Over 1 to 12 (MGEFPTLLQQGN) the chain is Periplasmic. The helical transmembrane segment at 13 to 33 (GWFFIPSAILLGILHGLEPGH) threads the bilayer. Residues 34–51 (SKTMMAAFIIAIKGTVKQ) lie on the Cytoplasmic side of the membrane. Residues 52–72 (AVMLGLAATLSHTAIVWLIAL) traverse the membrane as a helical segment. Residues 73–85 (GGMYLSRAFTAQS) lie on the Periplasmic side of the membrane. A helical membrane pass occupies residues 86-106 (VEPWLQLISAIIILSTACWMF). At 107–174 (WRTWRGEQQW…FDGQTVTNGQ (68 aa)) the chain is on the cytoplasmic side. The segment covering 122-141 (HHDHDHDHDHDHDHHGHIHP) has biased composition (basic and acidic residues). A disordered region spans residues 122–143 (HHDHDHDHDHDHDHHGHIHPEG). The helical transmembrane segment at 175 to 195 (ILLFGLTGGLIPCPAAITVLL) threads the bilayer. Residues 196-209 (ICIQLKAFTLGATM) lie on the Periplasmic side of the membrane. A helical transmembrane segment spans residues 210-230 (VLSFSLSLALTLVTVGVGAAI). Residues 231–251 (SVQQAAKRWSGFSTLARRAPY) are Cytoplasmic-facing. Residues 252 to 272 (FSSILIGLVGVYMGIHGYTGI) form a helical membrane-spanning segment. Topologically, residues 273–274 (MQ) are periplasmic.

This sequence belongs to the NiCoT transporter (TC 2.A.52) family. RcnA subfamily.

It localises to the cell inner membrane. Efflux system for nickel and cobalt. This Salmonella paratyphi A (strain ATCC 9150 / SARB42) protein is Nickel/cobalt efflux system RcnA (rcnA).